The primary structure comprises 400 residues: Nicotinate phosphoribosyltransferase (400 aa).

A Phosphohistidine; by autocatalysis modification is found at H220.

The protein belongs to the NAPRTase family. Transiently phosphorylated on a His residue during the reaction cycle. Phosphorylation strongly increases the affinity for substrates and increases the rate of nicotinate D-ribonucleotide production. Dephosphorylation regenerates the low-affinity form of the enzyme, leading to product release.

It catalyses the reaction nicotinate + 5-phospho-alpha-D-ribose 1-diphosphate + ATP + H2O = nicotinate beta-D-ribonucleotide + ADP + phosphate + diphosphate. It participates in cofactor biosynthesis; NAD(+) biosynthesis; nicotinate D-ribonucleotide from nicotinate: step 1/1. In terms of biological role, catalyzes the synthesis of beta-nicotinate D-ribonucleotide from nicotinate and 5-phospho-D-ribose 1-phosphate at the expense of ATP. The sequence is that of Nicotinate phosphoribosyltransferase from Escherichia coli O7:K1 (strain IAI39 / ExPEC).